The chain runs to 573 residues: Urease subunit alpha 1 (573 aa).

The Urease domain occupies 136–573 (GGIDTHVHFI…LPLAQRYFLF (438 aa)). His141, His143, and Lys224 together coordinate Ni(2+). Lys224 carries the N6-carboxylysine modification. His226 lines the substrate pocket. His253 and His279 together coordinate Ni(2+). Residue His327 is the Proton donor of the active site. Position 367 (Asp367) interacts with Ni(2+).

This sequence belongs to the metallo-dependent hydrolases superfamily. Urease alpha subunit family. May form a heterohexamer of 3 UreC (alpha) and 3 UreAB (gamma/beta) subunits. May also form a heterotrimer of UreA (gamma), UreB (beta) and UreC (alpha) subunits. Three heterotrimers associate to form the active enzyme. Ni cation is required as a cofactor. In terms of processing, carboxylation allows a single lysine to coordinate two nickel ions.

It localises to the cytoplasm. It catalyses the reaction urea + 2 H2O + H(+) = hydrogencarbonate + 2 NH4(+). It participates in nitrogen metabolism; urea degradation; CO(2) and NH(3) from urea (urease route): step 1/1. The protein is Urease subunit alpha 1 of Streptomyces coelicolor (strain ATCC BAA-471 / A3(2) / M145).